Consider the following 186-residue polypeptide: Acireductone dioxygenase (186 aa).

Fe(2+) contacts are provided by His89, His91, Glu95, and His134. Residues His89, His91, Glu95, and His134 each coordinate Ni(2+).

Belongs to the acireductone dioxygenase (ARD) family. It depends on Fe(2+) as a cofactor. Ni(2+) is required as a cofactor.

The protein localises to the cytoplasm. Its subcellular location is the nucleus. The catalysed reaction is 1,2-dihydroxy-5-(methylsulfanyl)pent-1-en-3-one + O2 = 4-methylsulfanyl-2-oxobutanoate + formate + 2 H(+). It catalyses the reaction 1,2-dihydroxy-5-(methylsulfanyl)pent-1-en-3-one + O2 = 3-(methylsulfanyl)propanoate + CO + formate + 2 H(+). The protein operates within amino-acid biosynthesis; L-methionine biosynthesis via salvage pathway; L-methionine from S-methyl-5-thio-alpha-D-ribose 1-phosphate: step 5/6. In terms of biological role, catalyzes 2 different reactions between oxygen and the acireductone 1,2-dihydroxy-3-keto-5-methylthiopentene (DHK-MTPene) depending upon the metal bound in the active site. Fe-containing acireductone dioxygenase (Fe-ARD) produces formate and 2-keto-4-methylthiobutyrate (KMTB), the alpha-ketoacid precursor of methionine in the methionine recycle pathway. Ni-containing acireductone dioxygenase (Ni-ARD) produces methylthiopropionate, carbon monoxide and formate, and does not lie on the methionine recycle pathway. The protein is Acireductone dioxygenase of Drosophila melanogaster (Fruit fly).